The chain runs to 592 residues: Ferric-chelate reductase 1 (592 aa).

Residues 2–22 (AAPQITLSVLVIALLTCSVTA) traverse the membrane as a helical segment. The Reelin domain maps to 13–179 (IALLTCSVTA…FTTPKATTQP (167 aa)). 4 N-linked (GlcNAc...) asparagine glycosylation sites follow: Asn85, Asn308, Asn321, and Asn353. The region spanning 216–331 (EPACVFLSFT…ESYYIFFAEG (116 aa)) is the DOMON domain. One can recognise a Cytochrome b561 domain in the interval 335–534 (DGRIFRHSQQ…IGTEVILEIH (200 aa)). A helical membrane pass occupies residues 372–392 (AHGALMFVAWMTTVSIGVLVA). Heme b contacts are provided by His373 and His414. 5 helical membrane-spanning segments follow: residues 415-435 (RMLM…PFVY), 446-466 (HPYL…LATF), 477-499 (VFNW…AMFL), 515-535 (YAMM…EIHA), and 569-589 (VVLA…LSAI). Residues His446 and His482 each coordinate heme b.

The protein belongs to the FRRS1 family. Requires heme b as cofactor. Expressed in spleen, liver and kidney with low expression in brain. Localizes in adult brain to the choroid plexus of the fourth, third, and lateral ventricles and to ependymal cells that line the ventricles.

Its subcellular location is the membrane. Functionally, ferric-chelate reductases reduce Fe(3+) to Fe(2+) before its transport from the endosome to the cytoplasm. The polypeptide is Ferric-chelate reductase 1 (FRRS1) (Mus musculus (Mouse)).